A 679-amino-acid chain; its full sequence is Methionine--tRNA ligase (679 aa).

A 'HIGH' region motif is present at residues 15 to 25; sequence PYANGPIHLGH. Zn(2+)-binding residues include C146, C149, C159, and C162. The short motif at 332 to 336 is the 'KMSKS' region element; that stretch reads KMSKS. K335 serves as a coordination point for ATP. The tRNA-binding domain occupies 578–679; the sequence is DFAKIDLRIA…EGAQPGMKVK (102 aa).

This sequence belongs to the class-I aminoacyl-tRNA synthetase family. MetG type 1 subfamily. Homodimer. It depends on Zn(2+) as a cofactor.

The protein resides in the cytoplasm. It catalyses the reaction tRNA(Met) + L-methionine + ATP = L-methionyl-tRNA(Met) + AMP + diphosphate. Is required not only for elongation of protein synthesis but also for the initiation of all mRNA translation through initiator tRNA(fMet) aminoacylation. In Shewanella halifaxensis (strain HAW-EB4), this protein is Methionine--tRNA ligase.